Reading from the N-terminus, the 216-residue chain is Transmembrane emp24 domain-containing protein eca (216 aa).

An N-terminal signal peptide occupies residues methionine 1 to glycine 20. At leucine 21 to serine 182 the chain is on the lumenal side. Residues arginine 30–valine 126 form the GOLD domain. The stretch at alanine 134–asparagine 164 forms a coiled coil. A helical membrane pass occupies residues arginine 183–methionine 203. The Cytoplasmic segment spans residues arginine 204–valine 216. The Prevents secretion from ER motif lies at lysine 213 to valine 216.

It belongs to the EMP24/GP25L family.

It localises to the endoplasmic reticulum membrane. Eca and bai are essential, though not redundant, for dorsoventral patterning of the embryo. Specifically required during early embryogenesis for the activity of maternal tkv, while the zygotic tkv is not affected. Involved in Golgi organization. The protein is Transmembrane emp24 domain-containing protein eca of Drosophila simulans (Fruit fly).